The chain runs to 377 residues: Chaperone protein DnaJ (377 aa).

A J domain is found at 4–69 (DYYEALGVTR…QKRAAYDRFG (66 aa)). The CR-type zinc finger occupies 135-213 (GKTAQIRVPT…CHGQGRVTQE (79 aa)). 8 residues coordinate Zn(2+): Cys-148, Cys-151, Cys-165, Cys-168, Cys-187, Cys-190, Cys-201, and Cys-204. 4 CXXCXGXG motif repeats span residues 148–155 (CDECSGSG), 165–172 (CTMCSGSG), 187–194 (CPGCNGRG), and 201–208 (CEKCHGQG).

Belongs to the DnaJ family. Homodimer. It depends on Zn(2+) as a cofactor.

It localises to the cytoplasm. Functionally, participates actively in the response to hyperosmotic and heat shock by preventing the aggregation of stress-denatured proteins and by disaggregating proteins, also in an autonomous, DnaK-independent fashion. Unfolded proteins bind initially to DnaJ; upon interaction with the DnaJ-bound protein, DnaK hydrolyzes its bound ATP, resulting in the formation of a stable complex. GrpE releases ADP from DnaK; ATP binding to DnaK triggers the release of the substrate protein, thus completing the reaction cycle. Several rounds of ATP-dependent interactions between DnaJ, DnaK and GrpE are required for fully efficient folding. Also involved, together with DnaK and GrpE, in the DNA replication of plasmids through activation of initiation proteins. This Brucella abortus (strain S19) protein is Chaperone protein DnaJ.